A 401-amino-acid polypeptide reads, in one-letter code: Nicotinate phosphoribosyltransferase (401 aa).

A Phosphohistidine; by autocatalysis modification is found at His224.

It belongs to the NAPRTase family. In terms of processing, transiently phosphorylated on a His residue during the reaction cycle. Phosphorylation strongly increases the affinity for substrates and increases the rate of nicotinate D-ribonucleotide production. Dephosphorylation regenerates the low-affinity form of the enzyme, leading to product release.

The enzyme catalyses nicotinate + 5-phospho-alpha-D-ribose 1-diphosphate + ATP + H2O = nicotinate beta-D-ribonucleotide + ADP + phosphate + diphosphate. It functions in the pathway cofactor biosynthesis; NAD(+) biosynthesis; nicotinate D-ribonucleotide from nicotinate: step 1/1. In terms of biological role, catalyzes the synthesis of beta-nicotinate D-ribonucleotide from nicotinate and 5-phospho-D-ribose 1-phosphate at the expense of ATP. In Pseudomonas putida (strain ATCC 700007 / DSM 6899 / JCM 31910 / BCRC 17059 / LMG 24140 / F1), this protein is Nicotinate phosphoribosyltransferase.